Reading from the N-terminus, the 181-residue chain is Oligoribonuclease (181 aa).

The Exonuclease domain maps to leucine 8–leucine 171. Tyrosine 129 is a catalytic residue.

It belongs to the oligoribonuclease family.

It localises to the cytoplasm. Its function is as follows. 3'-to-5' exoribonuclease specific for small oligoribonucleotides. The polypeptide is Oligoribonuclease (Photorhabdus laumondii subsp. laumondii (strain DSM 15139 / CIP 105565 / TT01) (Photorhabdus luminescens subsp. laumondii)).